The chain runs to 254 residues: Phosphoribosylaminoimidazole-succinocarboxamide synthase (254 aa).

It belongs to the SAICAR synthetase family.

It catalyses the reaction 5-amino-1-(5-phospho-D-ribosyl)imidazole-4-carboxylate + L-aspartate + ATP = (2S)-2-[5-amino-1-(5-phospho-beta-D-ribosyl)imidazole-4-carboxamido]succinate + ADP + phosphate + 2 H(+). It participates in purine metabolism; IMP biosynthesis via de novo pathway; 5-amino-1-(5-phospho-D-ribosyl)imidazole-4-carboxamide from 5-amino-1-(5-phospho-D-ribosyl)imidazole-4-carboxylate: step 1/2. This chain is Phosphoribosylaminoimidazole-succinocarboxamide synthase, found in Gluconacetobacter diazotrophicus (strain ATCC 49037 / DSM 5601 / CCUG 37298 / CIP 103539 / LMG 7603 / PAl5).